We begin with the raw amino-acid sequence, 413 residues long: Dolichyl-diphosphooligosaccharide--protein glycosyltransferase 48 kDa subunit (413 aa).

Over Gly1–Tyr383 the chain is Lumenal. The helical transmembrane segment at Pro384–Leu404 threads the bilayer. The Cytoplasmic portion of the chain corresponds to His405–Asp413.

It belongs to the DDOST 48 kDa subunit family. In terms of assembly, component of the oligosaccharyltransferase (OST) complex.

The protein resides in the endoplasmic reticulum. It localises to the endoplasmic reticulum membrane. It functions in the pathway protein modification; protein glycosylation. Subunit of the oligosaccharyl transferase (OST) complex that catalyzes the initial transfer of a defined glycan (Glc(3)Man(9)GlcNAc(2) in eukaryotes) from the lipid carrier dolichol-pyrophosphate to an asparagine residue within an Asn-X-Ser/Thr consensus motif in nascent polypeptide chains, the first step in protein N-glycosylation. N-glycosylation occurs cotranslationally and the complex associates with the Sec61 complex at the channel-forming translocon complex that mediates protein translocation across the endoplasmic reticulum (ER). All subunits are required for a maximal enzyme activity. Required for the assembly of both SST3A- and SS3B-containing OST complexes. The polypeptide is Dolichyl-diphosphooligosaccharide--protein glycosyltransferase 48 kDa subunit (Gallus gallus (Chicken)).